Here is a 961-residue protein sequence, read N- to C-terminus: Vitamin B12-dependent ribonucleotide reductase (961 aa).

Residues 1-23 form a disordered region; the sequence is MTETTSGPARGSRTKGTKATKGL. Residues serine 143, 159–160, glycine 188, 364–368, and 554–558 each bind substrate; these read AC, NPCSE, and PTGTI. Cysteines 160 and 377 form a disulfide. Residue asparagine 364 is the Proton acceptor of the active site. Cysteine 366 acts as the Cysteine radical intermediate in catalysis. The active-site Proton acceptor is the glutamate 368.

This sequence belongs to the ribonucleoside diphosphate reductase class-2 family. In terms of assembly, homotetramer. Adenosylcob(III)alamin is required as a cofactor.

The enzyme catalyses a 2'-deoxyribonucleoside 5'-diphosphate + [thioredoxin]-disulfide + H2O = a ribonucleoside 5'-diphosphate + [thioredoxin]-dithiol. Functionally, catalyzes the reduction of ribonucleotides to deoxyribonucleotides. May function to provide a pool of deoxyribonucleotide precursors for DNA repair during oxygen limitation and/or for immediate growth after restoration of oxygen. In Streptomyces clavuligerus, this protein is Vitamin B12-dependent ribonucleotide reductase (nrdJ).